Consider the following 199-residue polypeptide: NAD(P)H dehydrogenase (quinone) (199 aa).

The 187-residue stretch at 4–190 (VLVLYYSTYG…EGARHQGELI (187 aa)) folds into the Flavodoxin-like domain. FMN contacts are provided by residues 10-15 (STYGHV) and 78-80 (TRF). Residue Tyr12 coordinates NAD(+). Trp98 is a binding site for substrate. Residues 113–119 (STATQHG) and His134 contribute to the FMN site.

Belongs to the WrbA family. FMN is required as a cofactor.

The enzyme catalyses a quinone + NADH + H(+) = a quinol + NAD(+). It carries out the reaction a quinone + NADPH + H(+) = a quinol + NADP(+). The chain is NAD(P)H dehydrogenase (quinone) from Cupriavidus metallidurans (strain ATCC 43123 / DSM 2839 / NBRC 102507 / CH34) (Ralstonia metallidurans).